An 88-amino-acid chain; its full sequence is Large ribosomal subunit protein bL31B (88 aa).

The protein belongs to the bacterial ribosomal protein bL31 family. Type B subfamily. As to quaternary structure, part of the 50S ribosomal subunit.

The polypeptide is Large ribosomal subunit protein bL31B (Corynebacterium efficiens (strain DSM 44549 / YS-314 / AJ 12310 / JCM 11189 / NBRC 100395)).